Here is a 208-residue protein sequence, read N- to C-terminus: FMN-dependent NADH:quinone oxidoreductase 1 (208 aa).

17–19 (SVS) contacts FMN.

Belongs to the azoreductase type 1 family. Homodimer. The cofactor is FMN.

It catalyses the reaction 2 a quinone + NADH + H(+) = 2 a 1,4-benzosemiquinone + NAD(+). It carries out the reaction N,N-dimethyl-1,4-phenylenediamine + anthranilate + 2 NAD(+) = 2-(4-dimethylaminophenyl)diazenylbenzoate + 2 NADH + 2 H(+). In terms of biological role, quinone reductase that provides resistance to thiol-specific stress caused by electrophilic quinones. Functionally, also exhibits azoreductase activity. Catalyzes the reductive cleavage of the azo bond in aromatic azo compounds to the corresponding amines. The polypeptide is FMN-dependent NADH:quinone oxidoreductase 1 (Listeria innocua serovar 6a (strain ATCC BAA-680 / CLIP 11262)).